Here is a 450-residue protein sequence, read N- to C-terminus: Alpha-2B adrenergic receptor (450 aa).

The Extracellular portion of the chain corresponds to 1–12 (MDHQDPYSVQAT). A helical membrane pass occupies residues 13–38 (AAIAAAITFLILFTIFGNALVILAVL). At 39-48 (TSRSLRAPQN) the chain is on the cytoplasmic side. The chain crosses the membrane as a helical span at residues 49–69 (LFLVSLAAADILVATLIIPFS). Residues 70 to 86 (LANELLGYWYFRRTWCE) lie on the Extracellular side of the membrane. Residues C85 and C164 are joined by a disulfide bond. The chain crosses the membrane as a helical span at residues 87 to 107 (VYLALDVLFCTSSIVHLCAIS). Over 108 to 128 (LDRYWAVSRALEYNSKRTPRR) the chain is Cytoplasmic. The chain crosses the membrane as a helical span at residues 129–149 (IKCIILTVWLIAAVISLPPLI). The Extracellular portion of the chain corresponds to 150–172 (YKGDQGPQPRGRPQCKLNQEAWY). Residues 173-193 (ILASSIGSFFAPCLIMILVYL) traverse the membrane as a helical segment. The Cytoplasmic segment spans residues 194–368 (RIYLIAKRSN…RRAQLTREKR (175 aa)). Disordered regions lie at residues 204–229 (RRGPRAKGGPGQGESKQPRPDHGGAL) and 241–329 (ASAR…PLQQ). Residues 246–256 (VNGHSKSTGEK) are compositionally biased toward basic and acidic residues. Residues 293–311 (PEDEAEEEEEEEEEEEECE) show a composition bias toward acidic residues. Residues 312-326 (PQAVPVSPASACSPP) are compositionally biased toward low complexity. A helical membrane pass occupies residues 369-389 (FTFVLAVVIGVFVLCWFPFFF). Topologically, residues 390 to 405 (SYSLGAICPKHCKVPH) are extracellular. Residues 406–426 (GLFQFFFWIGYCNSSLNPVIY) traverse the membrane as a helical segment. Residues 427–450 (TIFNQDFRRAFRRILCRPWTQTAW) are Cytoplasmic-facing. C442 carries S-palmitoyl cysteine lipidation.

This sequence belongs to the G-protein coupled receptor 1 family. Adrenergic receptor subfamily. ADRA2B sub-subfamily. As to quaternary structure, interacts with RAB26. Interacts with PPP1R9B. Interacts with GGA1, GGA2 and GGA3.

The protein localises to the cell membrane. Alpha-2 adrenergic receptors mediate the catecholamine-induced inhibition of adenylate cyclase through the action of G proteins. The rank order of potency for agonists of this receptor is clonidine &gt; norepinephrine &gt; epinephrine = oxymetazoline &gt; dopamine &gt; p-tyramine = phenylephrine &gt; serotonin &gt; p-synephrine / p-octopamine. For antagonists, the rank order is yohimbine &gt; chlorpromazine &gt; phentolamine &gt; mianserine &gt; spiperone &gt; prazosin &gt; alprenolol &gt; propanolol &gt; pindolol. The protein is Alpha-2B adrenergic receptor (ADRA2B) of Homo sapiens (Human).